The primary structure comprises 465 residues: UDP-N-acetylmuramate--L-alanine ligase (465 aa).

112–118 lines the ATP pocket; that stretch reads GTHGKTT.

It belongs to the MurCDEF family.

The protein resides in the cytoplasm. The enzyme catalyses UDP-N-acetyl-alpha-D-muramate + L-alanine + ATP = UDP-N-acetyl-alpha-D-muramoyl-L-alanine + ADP + phosphate + H(+). Its pathway is cell wall biogenesis; peptidoglycan biosynthesis. Functionally, cell wall formation. The protein is UDP-N-acetylmuramate--L-alanine ligase of Burkholderia thailandensis (strain ATCC 700388 / DSM 13276 / CCUG 48851 / CIP 106301 / E264).